The following is a 418-amino-acid chain: Serine hydroxymethyltransferase (418 aa).

Residues Leu-121 and 125–127 (GHL) contribute to the (6S)-5,6,7,8-tetrahydrofolate site. At Lys-230 the chain carries N6-(pyridoxal phosphate)lysine. Residue 355 to 357 (SPF) participates in (6S)-5,6,7,8-tetrahydrofolate binding.

This sequence belongs to the SHMT family. Homodimer. Pyridoxal 5'-phosphate serves as cofactor.

The protein localises to the cytoplasm. The catalysed reaction is (6R)-5,10-methylene-5,6,7,8-tetrahydrofolate + glycine + H2O = (6S)-5,6,7,8-tetrahydrofolate + L-serine. It functions in the pathway one-carbon metabolism; tetrahydrofolate interconversion. It participates in amino-acid biosynthesis; glycine biosynthesis; glycine from L-serine: step 1/1. In terms of biological role, catalyzes the reversible interconversion of serine and glycine with tetrahydrofolate (THF) serving as the one-carbon carrier. This reaction serves as the major source of one-carbon groups required for the biosynthesis of purines, thymidylate, methionine, and other important biomolecules. Also exhibits THF-independent aldolase activity toward beta-hydroxyamino acids, producing glycine and aldehydes, via a retro-aldol mechanism. This is Serine hydroxymethyltransferase from Streptococcus pyogenes serotype M18 (strain MGAS8232).